A 243-amino-acid chain; its full sequence is Orotidine 5'-phosphate decarboxylase (243 aa).

Substrate contacts are provided by residues D19, K41, 69–78 (DLKFFDIPAT), T124, R185, Q194, G214, and R215. The active-site Proton donor is K71.

The protein belongs to the OMP decarboxylase family. Type 1 subfamily. As to quaternary structure, homodimer.

It catalyses the reaction orotidine 5'-phosphate + H(+) = UMP + CO2. It participates in pyrimidine metabolism; UMP biosynthesis via de novo pathway; UMP from orotate: step 2/2. In terms of biological role, catalyzes the decarboxylation of orotidine 5'-monophosphate (OMP) to uridine 5'-monophosphate (UMP). This Xanthomonas campestris pv. campestris (strain 8004) protein is Orotidine 5'-phosphate decarboxylase.